A 309-amino-acid polypeptide reads, in one-letter code: Porphobilinogen deaminase (309 aa).

Cysteine 244 carries the S-(dipyrrolylmethanemethyl)cysteine modification.

The protein belongs to the HMBS family. As to quaternary structure, monomer. Dipyrromethane is required as a cofactor.

It carries out the reaction 4 porphobilinogen + H2O = hydroxymethylbilane + 4 NH4(+). It functions in the pathway porphyrin-containing compound metabolism; protoporphyrin-IX biosynthesis; coproporphyrinogen-III from 5-aminolevulinate: step 2/4. Functionally, tetrapolymerization of the monopyrrole PBG into the hydroxymethylbilane pre-uroporphyrinogen in several discrete steps. The sequence is that of Porphobilinogen deaminase from Rhizobium meliloti (strain 1021) (Ensifer meliloti).